The following is a 174-amino-acid chain: Male-enhanced antigen 1 (174 aa).

Disordered regions lie at residues 1-77 and 94-123; these read MAAV…PVGD and LHLP…IPMD. Acidic residues-rich tracts occupy residues 38 to 48, 65 to 77, and 101 to 110; these read SSEEPEEEQEE, PEQE…PVGD, and LESEDEDEEG. The residue at position 103 (serine 103) is a Phosphoserine.

Functionally, may play an important role in spermatogenesis and/or testis development. The protein is Male-enhanced antigen 1 (MEA1) of Sus scrofa (Pig).